A 327-amino-acid polypeptide reads, in one-letter code: Ribosomal RNA small subunit methyltransferase H (327 aa).

Residues G41–H43, D60, Y87, D108, and Q115 each bind S-adenosyl-L-methionine. The interval A292–R327 is disordered.

This sequence belongs to the methyltransferase superfamily. RsmH family.

The protein resides in the cytoplasm. It carries out the reaction cytidine(1402) in 16S rRNA + S-adenosyl-L-methionine = N(4)-methylcytidine(1402) in 16S rRNA + S-adenosyl-L-homocysteine + H(+). Functionally, specifically methylates the N4 position of cytidine in position 1402 (C1402) of 16S rRNA. In Kocuria rhizophila (strain ATCC 9341 / DSM 348 / NBRC 103217 / DC2201), this protein is Ribosomal RNA small subunit methyltransferase H.